Here is a 362-residue protein sequence, read N- to C-terminus: MGQMDGGDGGGGGHPYHYQALLAAVHQQTVPFPNPFPAPSSGAEPPHPHNHNHNHNHNHNIHNSHNHNHNHNAAPHPCHTPTPTPTPRGFADWSASTSAFTSLAAHSSTAPSNAVHYSFSPCYAFWTHYMLNKNAYPTSFPAPHDDHLRLANNNHPRDAPGPASSYGVESFTSPSMAPNICTHMPPIEGPISAKEDKKPEILPRVVKSSDELETRNSNVEFHSETVGTLPESKQGHDSRATKLLNSGEYQVILRKELTKSDVGNVGRIVLPKKDAEASLPPLLQRDPLILHMDDMVLPVTWKFKYRYWPNNKSRMYILDSAGEFLKTHGLQAGDVIIIYKNLAPGKFIIRGEKAIHQQTTNP.

Positions Val-30–Ala-91 are disordered. Over residues Pro-48 to Asn-70 the composition is skewed to basic residues. A DNA-binding region (TF-B3) is located at residues Leu-253–Ile-355.

Post-translationally, polyubiquitinated. Ubiquitination leads to its subsequent degradation via the proteasome pathway. In terms of tissue distribution, expressed in roots.

Its subcellular location is the nucleus. Functionally, transcription regulator involved in iron deficiency response and tolerance. May regulate directly iron transporters or other transcription factors involved in iron-deficiency response. Binds specifically to the DNA sequence 5'-CATGC-3' of the IDE1 element found in the promoter of the barley iron deficiency-inducible gene IDS2. The sequence is that of B3 domain-containing protein IDEF1 (IDEF1) from Oryza sativa subsp. japonica (Rice).